Here is a 95-residue protein sequence, read N- to C-terminus: Protein K6 (95 aa).

A signal peptide spans 1–24 (MAPVHVLCCVSVLLATFYLTPTES).

This chain is Protein K6 (K6), found in Human herpesvirus 8 type P (isolate GK18) (HHV-8).